The sequence spans 167 residues: NAD(P)H-quinone oxidoreductase subunit J (167 aa).

It belongs to the complex I 30 kDa subunit family. In terms of assembly, NDH-1 can be composed of about 15 different subunits; different subcomplexes with different compositions have been identified which probably have different functions.

The protein resides in the cellular thylakoid membrane. The catalysed reaction is a plastoquinone + NADH + (n+1) H(+)(in) = a plastoquinol + NAD(+) + n H(+)(out). It catalyses the reaction a plastoquinone + NADPH + (n+1) H(+)(in) = a plastoquinol + NADP(+) + n H(+)(out). NDH-1 shuttles electrons from an unknown electron donor, via FMN and iron-sulfur (Fe-S) centers, to quinones in the respiratory and/or the photosynthetic chain. The immediate electron acceptor for the enzyme in this species is believed to be plastoquinone. Couples the redox reaction to proton translocation, and thus conserves the redox energy in a proton gradient. Cyanobacterial NDH-1 also plays a role in inorganic carbon-concentration. The polypeptide is NAD(P)H-quinone oxidoreductase subunit J (Trichodesmium erythraeum (strain IMS101)).